The primary structure comprises 1149 residues: Golgi apparatus protein 1 homolog (1149 aa).

Residues 1-19 form the signal peptide; sequence MWRFPLILASVCWLTTAQQ. Topologically, residues 20-1115 are extracellular; that stretch reads QNVANDPDKK…NLVMEHPERN (1096 aa). Cys-rich GLG1 repeat units lie at residues 24-69, 71-135, 139-207, 216-276, 277-344, 349-411, 415-475, 477-549, 551-610, 613-676, 677-736, 743-803, 809-867, 868-938, 945-1009, and 1010-1070; these read NDPD…FSET, TLSE…KNVT, KCHA…VKNA, ILGD…NDKF, MDPE…NQPE, QPSK…ESRN, KLGA…NVDS, DMVP…YDEQ, PLSV…ETDN, RKHP…DAKE, MNNK…FEHK, DLTD…IECL, HLGP…IVRL, LQRE…RQSI, DFSP…NKGL, and IRDK…DKQE. A glycan (N-linked (GlcNAc...) asparagine) is linked at N133. N411 is a glycosylation site (N-linked (GlcNAc...) asparagine). Residues 1116 to 1136 form a helical membrane-spanning segment; that stretch reads SILGYLAGFIVFILLIGCCCG. Over 1137–1149 the chain is Cytoplasmic; that stretch reads RVSKKQYIEMKNR.

Its subcellular location is the membrane. In Caenorhabditis elegans, this protein is Golgi apparatus protein 1 homolog.